The following is a 143-amino-acid chain: SsrA-binding protein (143 aa).

This sequence belongs to the SmpB family.

It is found in the cytoplasm. Functionally, required for rescue of stalled ribosomes mediated by trans-translation. Binds to transfer-messenger RNA (tmRNA), required for stable association of tmRNA with ribosomes. tmRNA and SmpB together mimic tRNA shape, replacing the anticodon stem-loop with SmpB. tmRNA is encoded by the ssrA gene; the 2 termini fold to resemble tRNA(Ala) and it encodes a 'tag peptide', a short internal open reading frame. During trans-translation Ala-aminoacylated tmRNA acts like a tRNA, entering the A-site of stalled ribosomes, displacing the stalled mRNA. The ribosome then switches to translate the ORF on the tmRNA; the nascent peptide is terminated with the 'tag peptide' encoded by the tmRNA and targeted for degradation. The ribosome is freed to recommence translation, which seems to be the essential function of trans-translation. The protein is SsrA-binding protein of Mycoplasmoides gallisepticum (strain R(low / passage 15 / clone 2)) (Mycoplasma gallisepticum).